A 343-amino-acid polypeptide reads, in one-letter code: Adenosine kinase (343 aa).

The active site involves D296.

Belongs to the carbohydrate kinase PfkB family. Mg(2+) serves as cofactor.

It carries out the reaction adenosine + ATP = AMP + ADP + H(+). Its pathway is purine metabolism; AMP biosynthesis via salvage pathway; AMP from adenosine: step 1/1. Functionally, ATP dependent phosphorylation of adenosine and other related nucleoside analogs to monophosphate derivatives. Can also act on the cytokinin isopentenyladenosine to produce isopentenyladenosine monophosphate. The protein is Adenosine kinase (ADK) of Physcomitrium patens (Spreading-leaved earth moss).